The chain runs to 258 residues: Triosephosphate isomerase (258 aa).

9–11 contributes to the substrate binding site; it reads NWK. His-105 acts as the Electrophile in catalysis. Glu-176 (proton acceptor) is an active-site residue. Substrate is bound by residues Gly-182 and Ser-214.

The protein belongs to the triosephosphate isomerase family. As to quaternary structure, homodimer.

The protein localises to the cytoplasm. It catalyses the reaction D-glyceraldehyde 3-phosphate = dihydroxyacetone phosphate. It functions in the pathway carbohydrate biosynthesis; gluconeogenesis. Its pathway is carbohydrate degradation; glycolysis; D-glyceraldehyde 3-phosphate from glycerone phosphate: step 1/1. Functionally, involved in the gluconeogenesis. Catalyzes stereospecifically the conversion of dihydroxyacetone phosphate (DHAP) to D-glyceraldehyde-3-phosphate (G3P). The chain is Triosephosphate isomerase from Mycoplasmopsis agalactiae (strain NCTC 10123 / CIP 59.7 / PG2) (Mycoplasma agalactiae).